The sequence spans 2144 residues: Cadherin EGF LAG seven-pass G-type receptor 2 (2144 aa).

4 consecutive Cadherin domains span residues 1–40 (EDQVSYTLAITARDNGIPQKSDTTYLEILVNDVNDNAPQF), 41–146 (LRDS…PPVF), 147–248 (EQDE…PPVL), and 253–371 (ILFN…SPLL). Residues 1-1605 (EDQVSYTLAI…GEILPLKTLT (1605 aa)) lie on the Extracellular side of the membrane. Asn261, Asn301, Asn407, and Asn437 each carry an N-linked (GlcNAc...) asparagine glycan. Positions 453 to 511 (DDNICLREPCENYMRCVSVLRFDSSAPFIASSSVLFRPIHPVGGLRCRCPPGFTGDYCE) constitute an EGF-like 1; calcium-binding domain. Disulfide bonds link Cys457/Cys468, Cys462/Cys499, Cys501/Cys510, Cys517/Cys528, Cys522/Cys537, Cys539/Cys548, Cys557/Cys568, Cys562/Cys578, and Cys580/Cys590. The EGF-like 2; calcium-binding domain maps to 513–549 (EVDLCYSRPCGPHGHCRSREGGYTCLCRDGYTGEHCE). The region spanning 553–591 (RSGRCTPGVCKNGGTCVNLLVGGFKCDCPSGDFEKPFCQ) is the EGF-like 3; calcium-binding domain. Residues 592 to 796 (VTTRSFPARS…IANNGTVPGC (205 aa)) enclose the Laminin G-like 1 domain. Residues Asn726 and Asn790 are each glycosylated (N-linked (GlcNAc...) asparagine). Disulfide bonds link Cys770–Cys796, Cys803–Cys814, Cys808–Cys823, and Cys825–Cys834. Positions 799–835 (KKNVCDSNTCHNGGTCVNQWDAFSCECPLGFGGKSCA) constitute an EGF-like 4; calcium-binding domain. (3R)-3-hydroxyasparagine is present on Asn816. One can recognise a Laminin G-like 2 domain in the interval 839-1016 (ANPQRFLGSS…GESINVEPGC (178 aa)). Residue Asn966 is glycosylated (N-linked (GlcNAc...) asparagine). Cystine bridges form between Cys986–Cys1016, Cys1022–Cys1033, Cys1027–Cys1042, Cys1044–Cys1053, Cys1057–Cys1068, Cys1062–Cys1080, Cys1082–Cys1091, Cys1112–Cys1124, Cys1114–Cys1131, Cys1133–Cys1146, Cys1149–Cys1161, Cys1151–Cys1168, Cys1170–Cys1179, and Cys1182–Cys1194. One can recognise an EGF-like 5; calcium-binding domain in the interval 1018 to 1053 (WPDPCDSNPCPTNSYCSNDWDSYSCSCDPGYYGDNC). The residue at position 1035 (Asn1035) is a (3R)-3-hydroxyasparagine. N-linked (GlcNAc...) asparagine glycosylation occurs at Asn1052. Positions 1054–1092 (TNVCDLNPCEHQSACTRKPSAPHGYICECLPNYLGPYCE) constitute an EGF-like 6; calcium-binding domain. Positions 1108–1147 (TCGPCNCDVSKGFDPDCNKTSGECHCKENHYRPPSSPTCL) constitute an EGF-like 7; calcium-binding domain. Asn1125 carries an N-linked (GlcNAc...) asparagine glycan. The 48-residue stretch at 1149 to 1196 (CDCYPTGSLSRVCDPEDGQCPCKPGVIGRQCDRCDNPFAEVTTNGCEV) folds into the Laminin EGF-like domain. 3 N-linked (GlcNAc...) asparagine glycosylation sites follow: Asn1249, Asn1268, and Asn1286. Residues 1424–1594 (ETTVILPESV…AVLMDVSRRE (171 aa)) form the GAIN-B domain. Positions 1439–1466 (PMVRSAGPGEAQETEELARRQRRHPELS) are disordered. Intrachain disulfides connect Cys1544/Cys1576 and Cys1564/Cys1578. Residues 1544-1594 (CVFWNHSILVSGTGGWSARGCEVVFRNESHVSCQCNHMTSFAVLMDVSRRE) are GPS. 2 N-linked (GlcNAc...) asparagine glycosylation sites follow: Asn1548 and Asn1570. The helical transmembrane segment at 1606 to 1626 (YVALGVTLAALMITFLFLTLL) threads the bilayer. Topologically, residues 1627–1641 (RALRSNQHGIRRNLT) are cytoplasmic. A helical transmembrane segment spans residues 1642–1662 (AALGLAQLVFLLGINQADLPF). Position 1663 (Ala1663) is a topological domain, extracellular. Residues 1664–1684 (CTVIAILLHFLYLCTFSWALL) traverse the membrane as a helical segment. The Cytoplasmic segment spans residues 1685-1705 (EALHLYRALTEVRDVNASPMR). A helical membrane pass occupies residues 1706–1726 (FYYMLGWGVPAFITGLAVGLD). The Extracellular segment spans residues 1727 to 1744 (PEGYGNPDFCWLSIYDTL). Residues 1745-1765 (IWSFAGPVAFAVSMSVFLYIL) traverse the membrane as a helical segment. Residues 1766 to 1789 (SARASCAAQRQGFEKKGPVSGLRS) are Cytoplasmic-facing. Residues 1790–1810 (SFTVLLLLSATWLLALLSVNS) form a helical membrane-spanning segment. The Extracellular segment spans residues 1811–1816 (DTLLFH). A helical membrane pass occupies residues 1817-1837 (YLFAACNCVQGPFIFLSYVVL). Residues 1838 to 2144 (SKEVRKALKF…SEFLFFNFLH (307 aa)) lie on the Cytoplasmic side of the membrane. The disordered stretch occupies residues 1914–2109 (TLNPGQVPPG…PPRPPPRQSL (196 aa)). Residues 1943–1955 (TDSDSDLSLEDDQ) are compositionally biased toward acidic residues. Positions 2016 to 2025 (GTTTKENSGS) are enriched in polar residues. A compositionally biased stretch (basic and acidic residues) spans 2028–2040 (LEERPRENGDALT). Over residues 2082-2095 (GTGSSRGSTASEGS) the composition is skewed to polar residues.

Belongs to the G-protein coupled receptor 2 family. LN-TM7 subfamily. As to quaternary structure, heterodimer of 2 chains generated by proteolytic processing; the large extracellular N-terminal fragment and the membrane-bound C-terminal fragment predominantly remain associated and non-covalently linked. Post-translationally, the iron and 2-oxoglutarate dependent 3-hydroxylation of aspartate and asparagine is (R) stereospecific within EGF domains. In terms of processing, autoproteolytically processed at the GPS region of the GAIN-B domain; this cleavage modulates receptor activity. As to expression, expressed in the brain. High expression in cerebellum and olfactory bulb. Weaker expression in cerebral cortex, hippocampus and brain stem.

The protein resides in the cell membrane. Its function is as follows. Receptor that may have an important role in cell/cell signaling during nervous system formation. The protein is Cadherin EGF LAG seven-pass G-type receptor 2 of Rattus norvegicus (Rat).